Here is a 396-residue protein sequence, read N- to C-terminus: Anhydro-N-acetylmuramic acid kinase (396 aa).

19–26 (GTSADGID) lines the ATP pocket.

Belongs to the anhydro-N-acetylmuramic acid kinase family.

The catalysed reaction is 1,6-anhydro-N-acetyl-beta-muramate + ATP + H2O = N-acetyl-D-muramate 6-phosphate + ADP + H(+). Its pathway is amino-sugar metabolism; 1,6-anhydro-N-acetylmuramate degradation. It functions in the pathway cell wall biogenesis; peptidoglycan recycling. In terms of biological role, catalyzes the specific phosphorylation of 1,6-anhydro-N-acetylmuramic acid (anhMurNAc) with the simultaneous cleavage of the 1,6-anhydro ring, generating MurNAc-6-P. Is required for the utilization of anhMurNAc either imported from the medium or derived from its own cell wall murein, and thus plays a role in cell wall recycling. The sequence is that of Anhydro-N-acetylmuramic acid kinase from Colwellia psychrerythraea (strain 34H / ATCC BAA-681) (Vibrio psychroerythus).